The sequence spans 417 residues: Serine hydroxymethyltransferase 1 (417 aa).

Residues leucine 121 and 125 to 127 each bind (6S)-5,6,7,8-tetrahydrofolate; that span reads GHL. Lysine 230 bears the N6-(pyridoxal phosphate)lysine mark. 355–357 contributes to the (6S)-5,6,7,8-tetrahydrofolate binding site; the sequence is SPF.

The protein belongs to the SHMT family. Homodimer. Pyridoxal 5'-phosphate is required as a cofactor.

The protein resides in the cytoplasm. The enzyme catalyses (6R)-5,10-methylene-5,6,7,8-tetrahydrofolate + glycine + H2O = (6S)-5,6,7,8-tetrahydrofolate + L-serine. It functions in the pathway one-carbon metabolism; tetrahydrofolate interconversion. It participates in amino-acid biosynthesis; glycine biosynthesis; glycine from L-serine: step 1/1. Its function is as follows. Catalyzes the reversible interconversion of serine and glycine with tetrahydrofolate (THF) serving as the one-carbon carrier. This reaction serves as the major source of one-carbon groups required for the biosynthesis of purines, thymidylate, methionine, and other important biomolecules. Also exhibits THF-independent aldolase activity toward beta-hydroxyamino acids, producing glycine and aldehydes, via a retro-aldol mechanism. In Pseudomonas aeruginosa (strain ATCC 15692 / DSM 22644 / CIP 104116 / JCM 14847 / LMG 12228 / 1C / PRS 101 / PAO1), this protein is Serine hydroxymethyltransferase 1.